The following is a 614-amino-acid chain: Vitamin B12 transporter BtuB (614 aa).

An N-terminal signal peptide occupies residues 1–20 (MIKKASLLTACSVTAFSAWA). The short motif at 26-33 (DTLVVTAN) is the TonB box element. One can recognise a TBDR plug domain in the interval 38–152 (PRSTVLAPTT…IGGVVNIITT (115 aa)). Cyanocob(III)alamin-binding positions include Leu83, Ser85, Asn92, and 110–111 (VS). The 460-residue stretch at 155–614 (EPGTEISAGW…EYTLSGSYTF (460 aa)) folds into the TBDR beta-barrel domain. 3 beta stranded membrane-spanning segments follow: residues 158–165 (TEISAGWG), 169–178 (YQNYDVSTQQ), and 184–195 (TRVTLLGDYAHT). 4 residues coordinate Ca(2+): Asp199, Gln211, Asp213, and Asp215. The next 2 membrane-spanning stretches (beta stranded) occupy residues 217–227 (FLSKTLYGALE) and 232–248 (DAWS…NRTN). Positions 249 and 250 each coordinate Ca(2+). Ala251 contributes to the cyanocob(III)alamin binding site. Ca(2+) is bound at residue Asp261. 14 consecutive transmembrane segments (beta stranded) span residues 263–277 (RKLY…LRYN), 279–296 (ELIK…KDYN), 309–325 (TLDE…NNII), 328–337 (HGNVGAGVDW), 353–369 (YDQR…QQVG), 371–381 (FTFEGAARSDD), 385–400 (FGRH…WEFI), 403–417 (YRFI…KAPN), 434–443 (KSKQWEGAFE), 449–458 (VNWRISGYRN), 473–490 (YYNE…TANF), 494–509 (PLTH…ARNA), 517–529 (RRAK…QLDW), and 535–550 (DWGI…YDKD). Thr309 is a cyanocob(III)alamin binding site. Residue Arg517 participates in cyanocob(III)alamin binding. Tyr551 contacts cyanocob(III)alamin. The next 3 membrane-spanning stretches (beta stranded) occupy residues 558–572 (TVKM…LAVA), 585–596 (IANLFDKDYETV), and 602–614 (AGRE…SYTF). Positions 597-614 (YGYQTAGREYTLSGSYTF) match the TonB C-terminal box motif.

This sequence belongs to the TonB-dependent receptor family. BtuB (TC 1.B.14.3.1) subfamily.

The protein localises to the cell outer membrane. Involved in the active translocation of vitamin B12 (cyanocobalamin) across the outer membrane to the periplasmic space. It derives its energy for transport by interacting with the trans-periplasmic membrane protein TonB. The chain is Vitamin B12 transporter BtuB from Shigella dysenteriae serotype 1 (strain Sd197).